Reading from the N-terminus, the 259-residue chain is ATP synthase subunit a (259 aa).

A propeptide spans 1 to 10 (MFNLLNTYIT) (removed in mature form). 6 helical membrane passes run 36-56 (LTTF…LYTL), 92-112 (WGLY…ANLI), 125-145 (LVFI…LGLY), 150-170 (VFFS…LLVI), 191-211 (ILAG…FMLI), and 216-236 (LVFG…EFAI).

Belongs to the ATPase A chain family. As to quaternary structure, F-type ATPases have 2 components, CF(1) - the catalytic core - and CF(0) - the membrane proton channel. In yeast, the dimeric form of ATP synthase consists of 17 polypeptides: alpha, beta, gamma, delta, epsilon, 4 (B), 5 (OSCP), 6 (A), 8, 9 (C), d, E (Tim11), f, g, h, i/j and k.

It is found in the mitochondrion inner membrane. In terms of biological role, mitochondrial membrane ATP synthase (F(1)F(0) ATP synthase or Complex V) produces ATP from ADP in the presence of a proton gradient across the membrane which is generated by electron transport complexes of the respiratory chain. F-type ATPases consist of two structural domains, F(1) - containing the extramembraneous catalytic core and F(0) - containing the membrane proton channel, linked together by a central stalk and a peripheral stalk. During catalysis, ATP synthesis in the catalytic domain of F(1) is coupled via a rotary mechanism of the central stalk subunits to proton translocation. Key component of the proton channel; it may play a direct role in the translocation of protons across the membrane. This chain is ATP synthase subunit a (ATP6), found in Saccharomyces cerevisiae (strain ATCC 204508 / S288c) (Baker's yeast).